A 169-amino-acid chain; its full sequence is Probable phospholipid hydroperoxide glutathione peroxidase (169 aa).

Cysteine 43 is a catalytic residue.

It belongs to the glutathione peroxidase family.

The protein localises to the cytoplasm. The enzyme catalyses a hydroperoxy polyunsaturated fatty acid + 2 glutathione = a hydroxy polyunsaturated fatty acid + glutathione disulfide + H2O. Protects cells and enzymes from oxidative damage, by catalyzing the reduction of hydrogen peroxide, lipid peroxides and organic hydroperoxide, by glutathione. This Nicotiana tabacum (Common tobacco) protein is Probable phospholipid hydroperoxide glutathione peroxidase.